The primary structure comprises 126 residues: Large-conductance mechanosensitive channel (126 aa).

Transmembrane regions (helical) follow at residues 17-37 (VDLAVGVIIGAAFGKIVSSFI) and 70-90 (GLFLSAVINFIIVAFVLFLII).

This sequence belongs to the MscL family. In terms of assembly, homopentamer.

It is found in the cell inner membrane. Its function is as follows. Channel that opens in response to stretch forces in the membrane lipid bilayer. May participate in the regulation of osmotic pressure changes within the cell. The polypeptide is Large-conductance mechanosensitive channel (Flavobacterium johnsoniae (strain ATCC 17061 / DSM 2064 / JCM 8514 / BCRC 14874 / CCUG 350202 / NBRC 14942 / NCIMB 11054 / UW101) (Cytophaga johnsonae)).